The following is a 292-amino-acid chain: Protease HtpX (292 aa).

The next 2 membrane-spanning stretches (helical) occupy residues 5–25 and 34–54; these read IFLF…VMSL and SGLL…SLLL. A Zn(2+)-binding site is contributed by His140. The active site involves Glu141. Position 144 (His144) interacts with Zn(2+). Helical transmembrane passes span 155–175 and 193–213; these read LLQG…GGII and IIVF…AMWF. Glu218 lines the Zn(2+) pocket.

This sequence belongs to the peptidase M48B family. Requires Zn(2+) as cofactor.

It is found in the cell inner membrane. In Xanthomonas axonopodis pv. citri (strain 306), this protein is Protease HtpX.